The following is a 463-amino-acid chain: Soluble pyridine nucleotide transhydrogenase (463 aa).

Glu35 to Cys44 serves as a coordination point for FAD.

Belongs to the class-I pyridine nucleotide-disulfide oxidoreductase family. FAD is required as a cofactor.

Its subcellular location is the cytoplasm. The enzyme catalyses NAD(+) + NADPH = NADH + NADP(+). In terms of biological role, conversion of NADPH, generated by peripheral catabolic pathways, to NADH, which can enter the respiratory chain for energy generation. The protein is Soluble pyridine nucleotide transhydrogenase of Chromohalobacter salexigens (strain ATCC BAA-138 / DSM 3043 / CIP 106854 / NCIMB 13768 / 1H11).